We begin with the raw amino-acid sequence, 313 residues long: 2,3-dihydroxyphenylpropionate/2,3-dihydroxicinnamic acid 1,2-dioxygenase (313 aa).

H116 (proton donor) is an active-site residue. Catalysis depends on H180, which acts as the Proton acceptor.

This sequence belongs to the LigB/MhpB extradiol dioxygenase family. Homotetramer. It depends on Fe(2+) as a cofactor.

It carries out the reaction 3-(2,3-dihydroxyphenyl)propanoate + O2 = (2Z,4E)-2-hydroxy-6-oxonona-2,4-dienedioate + H(+). The enzyme catalyses (2E)-3-(2,3-dihydroxyphenyl)prop-2-enoate + O2 = (2Z,4E,7E)-2-hydroxy-6-oxonona-2,4,7-trienedioate + H(+). It functions in the pathway aromatic compound metabolism; 3-phenylpropanoate degradation. Functionally, catalyzes the non-heme iron(II)-dependent oxidative cleavage of 2,3-dihydroxyphenylpropionic acid and 2,3-dihydroxicinnamic acid into 2-hydroxy-6-ketononadienedioate and 2-hydroxy-6-ketononatrienedioate, respectively. In Mycobacterium sp. (strain MCS), this protein is 2,3-dihydroxyphenylpropionate/2,3-dihydroxicinnamic acid 1,2-dioxygenase.